Consider the following 345-residue polypeptide: Phosphoribosylformylglycinamidine cyclo-ligase (345 aa).

The protein belongs to the AIR synthase family.

The protein resides in the cytoplasm. The catalysed reaction is 2-formamido-N(1)-(5-O-phospho-beta-D-ribosyl)acetamidine + ATP = 5-amino-1-(5-phospho-beta-D-ribosyl)imidazole + ADP + phosphate + H(+). It participates in purine metabolism; IMP biosynthesis via de novo pathway; 5-amino-1-(5-phospho-D-ribosyl)imidazole from N(2)-formyl-N(1)-(5-phospho-D-ribosyl)glycinamide: step 2/2. The chain is Phosphoribosylformylglycinamidine cyclo-ligase from Pectobacterium atrosepticum (strain SCRI 1043 / ATCC BAA-672) (Erwinia carotovora subsp. atroseptica).